The primary structure comprises 127 residues: UPF0166 protein PH1503 (127 aa).

It belongs to the UPF0166 family.

In Pyrococcus horikoshii (strain ATCC 700860 / DSM 12428 / JCM 9974 / NBRC 100139 / OT-3), this protein is UPF0166 protein PH1503.